The primary structure comprises 475 residues: Luvungin A synthase CYP716AC1 (475 aa).

Residues 3 to 23 (FIILSLLLLSLALYSLYYVII) traverse the membrane as a helical segment. Cysteine 423 contacts heme.

Belongs to the cytochrome P450 family. Heme is required as a cofactor. Expressed in flowers, maturing fruits and in juice vesicles.

It localises to the membrane. The enzyme catalyses (21S)-21-acetoxyl-apo-melianone + reduced [NADPH--hemoprotein reductase] + O2 = luvungin A + oxidized [NADPH--hemoprotein reductase] + H2O + H(+). It participates in secondary metabolite biosynthesis; terpenoid biosynthesis. In terms of biological role, monooxygenase involved in the biosynthesis of limonoids triterpene natural products such as limonin, a compound with insecticidal activity responsible for the bitter taste in citrus. Catalyzes the conversion of (21S)-21-acetoxyl-apo-melianone to luvungin A. The sequence is that of Luvungin A synthase CYP716AC1 from Citrus sinensis (Sweet orange).